The chain runs to 213 residues: MSERDRNGGRSADNNRNDRNERGGRNDRGGRNDRRNNQQDERNQYIERVVTINRVSKVVKGGRRFSFTALVIVGDGQGMVGVGYGKAKEVPAAIQKGAEEARKNFFRVPMINGTITHPVQGEAAAGVVMLRPAAPGTGVIAGGAARPVLECAGVQDILCKSLGSPNAINVVHATVAGLKELVRPEEVAARRGKSLEEVAPAAMLRARAAGQGA.

Residues 1 to 42 (MSERDRNGGRSADNNRNDRNERGGRNDRGGRNDRRNNQQDER) form a disordered region. The 64-residue stretch at 45–108 (YIERVVTINR…EEARKNFFRV (64 aa)) folds into the S5 DRBM domain.

This sequence belongs to the universal ribosomal protein uS5 family. Part of the 30S ribosomal subunit. Contacts proteins S4 and S8.

Functionally, with S4 and S12 plays an important role in translational accuracy. In terms of biological role, located at the back of the 30S subunit body where it stabilizes the conformation of the head with respect to the body. This is Small ribosomal subunit protein uS5 from Corynebacterium urealyticum (strain ATCC 43042 / DSM 7109).